A 208-amino-acid chain; its full sequence is Small ribosomal subunit protein eS8 (208 aa).

The segment at 1–40 (MGISRDNWHKRRKTGGKRKPVHKKRKYELGRPPSNTKLGP) is disordered. Over residues 8 to 26 (WHKRRKTGGKRKPVHKKRK) the composition is skewed to basic residues.

Belongs to the eukaryotic ribosomal protein eS8 family. Component of the small ribosomal subunit.

The protein localises to the cytoplasm. Functionally, component of the small ribosomal subunit. The ribosome is a large ribonucleoprotein complex responsible for the synthesis of proteins in the cell. The sequence is that of Small ribosomal subunit protein eS8 (rps8) from Ictalurus punctatus (Channel catfish).